The sequence spans 293 residues: Phosphate-binding protein PstS 2 (293 aa).

The signal sequence occupies residues 1 to 23; the sequence is MKKHKMLSLLAVSGLMGIGILAG. Cys24 is lipidated: N-palmitoyl cysteine. Residue Cys24 is the site of S-diacylglycerol cysteine attachment.

Belongs to the PstS family. In terms of assembly, the complex is composed of two ATP-binding proteins (PstB), two transmembrane proteins (PstC and PstA) and a solute-binding protein (PstS).

The protein localises to the cell membrane. In terms of biological role, part of the ABC transporter complex PstSACB involved in phosphate import. This Streptococcus agalactiae serotype III (strain NEM316) protein is Phosphate-binding protein PstS 2 (pstS2).